A 171-amino-acid chain; its full sequence is Small ribosomal subunit protein uS4 (171 aa).

In terms of domain architecture, S4 RNA-binding spans 103-167 (RRLQTLVHKR…SPMKKQIEAA (65 aa)).

This sequence belongs to the universal ribosomal protein uS4 family. In terms of assembly, part of the 30S ribosomal subunit. Contacts protein S5. The interaction surface between S4 and S5 is involved in control of translational fidelity.

One of the primary rRNA binding proteins, it binds directly to 16S rRNA where it nucleates assembly of the body of the 30S subunit. Functionally, with S5 and S12 plays an important role in translational accuracy. The polypeptide is Small ribosomal subunit protein uS4 (Methanothermobacter thermautotrophicus (strain ATCC 29096 / DSM 1053 / JCM 10044 / NBRC 100330 / Delta H) (Methanobacterium thermoautotrophicum)).